We begin with the raw amino-acid sequence, 512 residues long: Protein male-specific lethal-3 (512 aa).

The region spanning 11 to 90 (FHKGEIVLCY…QLQRELAEAA (80 aa)) is the Chromo domain. Residues 98–175 (YSYKGTPDKP…DGRLKGNRGR (78 aa)) are disordered. The segment covering 149-169 (RTRDNSGGKRKEKPPSGDGRL) has biased composition (basic and acidic residues). In terms of domain architecture, MRG spans 196–500 (QEDRIMMRVS…STALPQEDLQ (305 aa)).

As to quaternary structure, component of the male-specific lethal (MSL) histone acetyltransferase complex, composed of mof, mle, msl-1, msl-2 and msl-3 proteins, as well as roX1 and roX2 non-coding RNAs. Component of a maternal MSL subcomplex composed of mof, msl-1 and msl-3. In terms of processing, ubiquitinated by msl-2.

Its subcellular location is the nucleus. It is found in the chromosome. Its function is as follows. Component of the male-specific lethal (MSL) histone acetyltransferase complex, a multiprotein complex essential for elevating transcription of the single X chromosome in the male (X chromosome dosage compensation). The MSL complex specifically associates with the single X chromosome in males and mediates formation of H4K16ac, promoting a two-fold activation of X chromosome. Acts as a histone reader that specifically recognizes and binds histone H3 trimethylated at 'Lys-36' (H3K36me3) and histone H4 monomethylated at 'Lys-20' (H4K20me1). Within the MSL complex, mediates the spreading of the MSL complex from initiation sites on the male X chromosome to flanking chromatin. Following initial recruitment of the MSL complex to male X chromosome by msl-2, msl-3 binds H3K36me3 and promotes spreading of the MSL complex in cis. In addition to its role in dosage compensation in males, promotes germline stem cell differentiation in females: recognizes and binds H3K36me3, promoting recruitment of the ATAC complex and transcription of genes, such as RpS19b. The polypeptide is Protein male-specific lethal-3 (Drosophila melanogaster (Fruit fly)).